A 338-amino-acid polypeptide reads, in one-letter code: Fructose-1,6-bisphosphatase class 1 (338 aa).

Mg(2+)-binding residues include glutamate 90, aspartate 112, leucine 114, and aspartate 115. Substrate contacts are provided by residues 115 to 118 (DGSS), asparagine 207, and lysine 273. Mg(2+) is bound at residue glutamate 279.

This sequence belongs to the FBPase class 1 family. In terms of assembly, homotetramer. Mg(2+) serves as cofactor.

It localises to the cytoplasm. It catalyses the reaction beta-D-fructose 1,6-bisphosphate + H2O = beta-D-fructose 6-phosphate + phosphate. The protein operates within carbohydrate biosynthesis; gluconeogenesis. The polypeptide is Fructose-1,6-bisphosphatase class 1 (Xanthomonas campestris pv. campestris (strain 8004)).